A 144-amino-acid polypeptide reads, in one-letter code: MQLNNLKPAAGSKHAKRRVGRGIGSGLGKTAGRGHKGQKSRSGGFHKVGFEGGQMPLYRRLPKRGFTSLTKAFTAEVTLRDIERLEAAEVDLLVLKQAGLVGDLVKSAKVIKAGELTRKVTIKGLGATAGAKAAIEAAGGQIAA.

A disordered region spans residues 1-48; sequence MQLNNLKPAAGSKHAKRRVGRGIGSGLGKTAGRGHKGQKSRSGGFHKV. Gly residues predominate over residues 21–31; the sequence is RGIGSGLGKTA.

Belongs to the universal ribosomal protein uL15 family. In terms of assembly, part of the 50S ribosomal subunit.

Functionally, binds to the 23S rRNA. This Cupriavidus taiwanensis (strain DSM 17343 / BCRC 17206 / CCUG 44338 / CIP 107171 / LMG 19424 / R1) (Ralstonia taiwanensis (strain LMG 19424)) protein is Large ribosomal subunit protein uL15.